Reading from the N-terminus, the 728-residue chain is 1,4-alpha-glucan branching enzyme GlgB (728 aa).

Residue Asp-405 is the Nucleophile of the active site. The active-site Proton donor is Glu-458.

This sequence belongs to the glycosyl hydrolase 13 family. GlgB subfamily. As to quaternary structure, monomer.

It catalyses the reaction Transfers a segment of a (1-&gt;4)-alpha-D-glucan chain to a primary hydroxy group in a similar glucan chain.. The protein operates within glycan biosynthesis; glycogen biosynthesis. Functionally, catalyzes the formation of the alpha-1,6-glucosidic linkages in glycogen by scission of a 1,4-alpha-linked oligosaccharide from growing alpha-1,4-glucan chains and the subsequent attachment of the oligosaccharide to the alpha-1,6 position. This chain is 1,4-alpha-glucan branching enzyme GlgB, found in Shigella dysenteriae serotype 1 (strain Sd197).